The primary structure comprises 134 residues: Putative STAG3-like protein 2 (134 aa).

The 86-residue stretch at 10–95 (PKVTCRDVLP…GRFKDWMVSM (86 aa)) folds into the SCD domain.

It belongs to the SCC3 family.

It localises to the nucleus. This Homo sapiens (Human) protein is Putative STAG3-like protein 2 (STAG3L2).